The primary structure comprises 427 residues: Histidinol dehydrogenase (427 aa).

Positions 232, 254, and 257 each coordinate substrate. Positions 254 and 257 each coordinate Zn(2+). Active-site proton acceptor residues include Glu-322 and His-323. The substrate site is built by His-323, Asp-356, Glu-410, and His-415. Asp-356 provides a ligand contact to Zn(2+). His-415 serves as a coordination point for Zn(2+).

This sequence belongs to the histidinol dehydrogenase family. Zn(2+) serves as cofactor.

The enzyme catalyses L-histidinol + 2 NAD(+) + H2O = L-histidine + 2 NADH + 3 H(+). The protein operates within amino-acid biosynthesis; L-histidine biosynthesis; L-histidine from 5-phospho-alpha-D-ribose 1-diphosphate: step 9/9. Catalyzes the sequential NAD-dependent oxidations of L-histidinol to L-histidinaldehyde and then to L-histidine. This is Histidinol dehydrogenase from Listeria monocytogenes serotype 4b (strain F2365).